The sequence spans 83 residues: Exodeoxyribonuclease 7 small subunit (83 aa).

Belongs to the XseB family. As to quaternary structure, heterooligomer composed of large and small subunits.

Its subcellular location is the cytoplasm. The catalysed reaction is Exonucleolytic cleavage in either 5'- to 3'- or 3'- to 5'-direction to yield nucleoside 5'-phosphates.. Its function is as follows. Bidirectionally degrades single-stranded DNA into large acid-insoluble oligonucleotides, which are then degraded further into small acid-soluble oligonucleotides. The chain is Exodeoxyribonuclease 7 small subunit from Novosphingobium aromaticivorans (strain ATCC 700278 / DSM 12444 / CCUG 56034 / CIP 105152 / NBRC 16084 / F199).